Here is a 608-residue protein sequence, read N- to C-terminus: Albumin (608 aa).

An N-terminal signal peptide occupies residues 1–18; it reads MKWVTFISLLFLFSSAYS. The propeptide occupies 19–24; that stretch reads RGVFRR. Albumin domains follow at residues 19-210, 211-403, and 404-601; these read RGVF…DALE, GKSL…EFQP, and LVDE…KLVE. A Cu cation-binding site is contributed by His27. The residue at position 29 (Ser29) is a Phosphoserine. Ca(2+)-binding residues include Glu30 and Asp37. A disulfide bridge links Cys77 with Cys86. Ser82 and Ser89 each carry phosphoserine. A Zn(2+)-binding site is contributed by His91. Intrachain disulfides connect Cys99/Cys115, Cys114/Cys125, Cys148/Cys193, Cys192/Cys201, Cys224/Cys270, and Cys269/Cys277. The residue at position 107 (Thr107) is a Phosphothreonine. The residue at position 229 (Lys229) is an N6-succinyllysine. Residue Glu268 coordinates Ca(2+). His271 and Asp273 together coordinate Zn(2+). Residues Asp273, Glu276, Asp279, and Asp283 each contribute to the Ca(2+) site. 8 disulfide bridges follow: Cys289–Cys303, Cys302–Cys313, Cys340–Cys385, Cys384–Cys393, Cys416–Cys462, Cys461–Cys472, Cys485–Cys501, and Cys500–Cys511. Position 297 is a phosphoserine (Ser297). Ser443 carries the post-translational modification Phosphoserine. Residues Thr444 and Thr446 each carry the phosphothreonine modification. Lys460 carries the post-translational modification N6-succinyllysine. Residue Ser513 is modified to Phosphoserine. 2 disulfide bridges follow: Cys538–Cys583 and Cys582–Cys591. Residue Lys558 is modified to N6-methyllysine. A Phosphothreonine modification is found at Thr570. Lys588 bears the N6-succinyllysine mark.

This sequence belongs to the ALB/AFP/VDB family. Interacts with FCGRT; this interaction regulates ALB homeostasis. Interacts with TASOR. In plasma, occurs in a covalently-linked complex with chromophore-bound alpha-1-microglobulin; this interaction does not prevent fatty acid binding to ALB. Phosphorylated by FAM20C in the extracellular medium. In terms of tissue distribution, plasma.

Its subcellular location is the secreted. Binds water, Ca(2+), Na(+), K(+), fatty acids, hormones, bilirubin and drugs. Its main function is the regulation of the colloidal osmotic pressure of blood. Major zinc transporter in plasma, typically binds about 80% of all plasma zinc. Major calcium and magnesium transporter in plasma, binds approximately 45% of circulating calcium and magnesium in plasma. Potentially has more than two calcium-binding sites and might additionally bind calcium in a non-specific manner. The shared binding site between zinc and calcium at residue Asp-273 suggests a crosstalk between zinc and calcium transport in the blood. The rank order of affinity is zinc &gt; calcium &gt; magnesium. Binds to the bacterial siderophore enterobactin and inhibits enterobactin-mediated iron uptake of E.coli from ferric transferrin, and may thereby limit the utilization of iron and growth of enteric bacteria such as E.coli. Does not prevent iron uptake by the bacterial siderophore aerobactin. The sequence is that of Albumin (ALB) from Oryctolagus cuniculus (Rabbit).